A 61-amino-acid chain; its full sequence is Short neurotoxin 1 (61 aa).

4 disulfide bridges follow: Cys3–Cys23, Cys17–Cys40, Cys42–Cys53, and Cys54–Cys59.

This sequence belongs to the three-finger toxin family. Short-chain subfamily. Type I alpha-neurotoxin sub-subfamily. As to expression, expressed by the venom gland.

The protein resides in the secreted. Its function is as follows. Binds with high affinity to muscular nicotinic acetylcholine receptors (nAChRs) (tested on Torpedo marmorata AChR, Kd=0.07 nM) and with low affinity to neuronal alpha-7/CHRNA7 nAChRs (tested on chimeric receptor, Kd=3 uM) and inhibit acetylcholine from binding to the receptor, thereby impairing neuromuscular transmission. Produces peripheral paralysis by blocking neuromuscular transmission at the postsynaptic site. This Naja pallida (Red spitting cobra) protein is Short neurotoxin 1.